The sequence spans 501 residues: Lysine--tRNA ligase (501 aa).

Residues Glu404 and Glu411 each contribute to the Mg(2+) site.

It belongs to the class-II aminoacyl-tRNA synthetase family. Homodimer. It depends on Mg(2+) as a cofactor.

The protein resides in the cytoplasm. It catalyses the reaction tRNA(Lys) + L-lysine + ATP = L-lysyl-tRNA(Lys) + AMP + diphosphate. The protein is Lysine--tRNA ligase of Campylobacter jejuni subsp. doylei (strain ATCC BAA-1458 / RM4099 / 269.97).